Reading from the N-terminus, the 477-residue chain is Ankyrin repeat, SAM and basic leucine zipper domain-containing protein 1 (477 aa).

A disordered region spans residues 1-24; the sequence is MATSALRGLAVAGGGESSESEDDG. A phosphoserine mark is found at Ser17, Ser18, and Ser20. 6 ANK repeats span residues 46 to 76, 80 to 109, 112 to 146, 150 to 179, 183 to 212, and 216 to 245; these read EKKE…SVDA, YGWT…NASF, DKQT…DPNV, RLMT…EVNT, NGYT…NKML, and DGKL…PLEG. The 63-residue stretch at 274–336 folds into the SAM domain; it reads SYAEFGDLEV…KILAALKELE (63 aa).

Interacts with DDX4, PIWIL1, RANBP9 and TDRD1.

The protein localises to the cytoplasm. Its function is as follows. Plays a central role during spermatogenesis by repressing transposable elements and preventing their mobilization, which is essential for the germline integrity. Acts via the piRNA metabolic process, which mediates the repression of transposable elements during meiosis by forming complexes composed of piRNAs and Piwi proteins and governs the methylation and subsequent repression of transposons. Its association with pi-bodies suggests a participation in the primary piRNAs metabolic process. Required prior to the pachytene stage to facilitate the production of multiple types of piRNAs, including those associated with repeats involved in the regulation of retrotransposons. May act by mediating protein-protein interactions during germ cell maturation. This Saimiri boliviensis boliviensis (Bolivian squirrel monkey) protein is Ankyrin repeat, SAM and basic leucine zipper domain-containing protein 1 (ASZ1).